The primary structure comprises 113 residues: Nascent polypeptide-associated complex protein (113 aa).

Residues 5–73 enclose the NAC-A/B domain; that stretch reads GMNPAKMKQM…AKEVPKSLEI (69 aa).

It belongs to the NAC-alpha family. In terms of assembly, homodimer. Interacts with the ribosome. Binds ribosomal RNA.

Its function is as follows. Contacts the emerging nascent chain on the ribosome. The sequence is that of Nascent polypeptide-associated complex protein from Methanosarcina acetivorans (strain ATCC 35395 / DSM 2834 / JCM 12185 / C2A).